A 332-amino-acid chain; its full sequence is Receptor polysaccharide phosphotransferase WefC (332 aa).

The protein belongs to the stealth family.

The protein is Receptor polysaccharide phosphotransferase WefC (wefC) of Streptococcus oralis.